We begin with the raw amino-acid sequence, 575 residues long: Chaperonin CPN60-2, mitochondrial (575 aa).

The transit peptide at 1-32 (MHRFASGLASKARLARKGANQIASRSSWSRNY) directs the protein to the mitochondrion.

Belongs to the chaperonin (HSP60) family.

Its subcellular location is the mitochondrion. In terms of biological role, implicated in mitochondrial protein import and macromolecular assembly. May facilitate the correct folding of imported proteins. May also prevent misfolding and promote the refolding and proper assembly of unfolded polypeptides generated under stress conditions in the mitochondrial matrix. This Cucurbita maxima (Pumpkin) protein is Chaperonin CPN60-2, mitochondrial (CPN60-2).